We begin with the raw amino-acid sequence, 454 residues long: MPTVHVIGLGRSGIAAARLLKRQGWQVEVSDRRQTPALQSQQQLLQAEGIPVQLNYDFDLQTLISVGLRVPDEIVISPGVPWHSPALVAARQAGIPVRGEVAIAWQTLAHLPWVCITGTNGKTTTTALTAAIFQAAGYNAPACGNIGNSICEVALTARALDWVIAEISSYQLESSPPLQPEFALWTTLTPDHLERHGTLDAYVATKAHLMNGAKHVILNGDDPYLRQHMVNRWPQAWWISTQGAIALPKGIAQGIYIAEDQVWFQDQPLLPTHILQMPGRHNQQNFLLAVATAHLAGIPAETIAKGVAGFAGVPHRLERIRQWREVEWINDSKATNYDAAEIGLRSVTGPVILIAGGQAKKGDDRPWLNLIQEKAAWVLLIGEAAPQFAQRLEAIGFTNYEIMETLDRAVAAAAELVTQYPIKTVLFSPGCASFDQYQNFEERGDHFRQLCLEL.

Residue 118 to 124 (GTNGKTT) coordinates ATP.

It belongs to the MurCDEF family.

It localises to the cytoplasm. The catalysed reaction is UDP-N-acetyl-alpha-D-muramoyl-L-alanine + D-glutamate + ATP = UDP-N-acetyl-alpha-D-muramoyl-L-alanyl-D-glutamate + ADP + phosphate + H(+). It participates in cell wall biogenesis; peptidoglycan biosynthesis. Functionally, cell wall formation. Catalyzes the addition of glutamate to the nucleotide precursor UDP-N-acetylmuramoyl-L-alanine (UMA). This is UDP-N-acetylmuramoylalanine--D-glutamate ligase from Thermosynechococcus vestitus (strain NIES-2133 / IAM M-273 / BP-1).